The sequence spans 189 residues: Elongation factor P (189 aa).

This sequence belongs to the elongation factor P family.

It is found in the cytoplasm. It participates in protein biosynthesis; polypeptide chain elongation. Involved in peptide bond synthesis. Stimulates efficient translation and peptide-bond synthesis on native or reconstituted 70S ribosomes in vitro. Probably functions indirectly by altering the affinity of the ribosome for aminoacyl-tRNA, thus increasing their reactivity as acceptors for peptidyl transferase. The chain is Elongation factor P from Xanthobacter autotrophicus (strain ATCC BAA-1158 / Py2).